The primary structure comprises 268 residues: Tropinone reductase homolog (268 aa).

Position 21–45 (21–45) interacts with NADP(+); that stretch reads LVTGGTRGIGYAIVEELANFGAEVY. Ser154 contributes to the substrate binding site. The active-site Proton acceptor is the Tyr167.

This sequence belongs to the short-chain dehydrogenases/reductases (SDR) family.

The polypeptide is Tropinone reductase homolog (Datura stramonium (Jimsonweed)).